The chain runs to 589 residues: L-fucose isomerase (589 aa).

Active-site proton acceptor residues include E340 and D364. Mn(2+) is bound by residues E340, D364, and H527.

The protein belongs to the L-fucose isomerase family. Mn(2+) serves as cofactor.

The protein localises to the cytoplasm. It carries out the reaction L-fucose = L-fuculose. The protein operates within carbohydrate degradation; L-fucose degradation; L-lactaldehyde and glycerone phosphate from L-fucose: step 1/3. Functionally, converts the aldose L-fucose into the corresponding ketose L-fuculose. The polypeptide is L-fucose isomerase (Haemophilus influenzae (strain ATCC 51907 / DSM 11121 / KW20 / Rd)).